Here is an 83-residue protein sequence, read N- to C-terminus: Large ribosomal subunit protein bL27 (83 aa).

The segment at 1 to 25 is disordered; sequence MAHKKGQGASRNGRDSESKRLGLKV.

The protein belongs to the bacterial ribosomal protein bL27 family.

This chain is Large ribosomal subunit protein bL27, found in Chlamydia trachomatis serovar L2 (strain ATCC VR-902B / DSM 19102 / 434/Bu).